A 664-amino-acid polypeptide reads, in one-letter code: Protein SIEVE ELEMENT OCCLUSION C (664 aa).

This is Protein SIEVE ELEMENT OCCLUSION C from Arabidopsis thaliana (Mouse-ear cress).